Reading from the N-terminus, the 201-residue chain is Ras-related protein Rab-9B (201 aa).

GTP-binding residues include Val-18, Gly-19, Lys-20, Ser-21, Ser-22, Asp-33, Ser-34, Ala-36, His-38, and Thr-39. Ser-21 serves as a coordination point for Mg(2+). A Switch 1 motif is present at residues 31–42 (KFDSQAFHTIGV). Ser-34 is modified (phosphoserine). 2 residues coordinate Mg(2+): Thr-39 and Asp-62. The short motif at 64–78 (AGQERFKSLRTPFYR) is the Switch 2 element. GTP contacts are provided by Gly-65, Asn-124, Lys-125, Ala-155, and Lys-156. Residues Cys-200 and Cys-201 are each lipidated (S-geranylgeranyl cysteine).

This sequence belongs to the small GTPase superfamily. Rab family. As to quaternary structure, interacts (GTP-bound form) with SGSM1; the GDP-bound form has much lower affinity for SGSM1. The GTP-bound form but not the GDP-bound form interacts with HPS4 and the BLOC-3 complex (heterodimer of HPS1 and HPS4) but does not interact with HPS1 alone. Interacts (GTP-bound form) with NDE1. Requires Mg(2+) as cofactor.

The protein localises to the cell membrane. It localises to the cytoplasmic vesicle. Its subcellular location is the phagosome membrane. It catalyses the reaction GTP + H2O = GDP + phosphate + H(+). Its activity is regulated as follows. Regulated by guanine nucleotide exchange factors (GEFs) which promote the exchange of bound GDP for free GTP. Regulated by GTPase activating proteins (GAPs) which increase the GTP hydrolysis activity. Inhibited by GDP dissociation inhibitors (GDIs). The small GTPases Rab are key regulators of intracellular membrane trafficking, from the formation of transport vesicles to their fusion with membranes. Rabs cycle between an inactive GDP-bound form and an active GTP-bound form that is able to recruit to membranes different sets of downstream effectors directly responsible for vesicle formation, movement, tethering and fusion. RAB9B is involved in the transport of proteins between the endosomes and the trans Golgi network. May use NDE1/NDEL1 as an effector to interact with the dynein motor complex in order to control retrograde trafficking of RAB9-associated late endosomes to the TGN. This Mus musculus (Mouse) protein is Ras-related protein Rab-9B.